Here is a 103-residue protein sequence, read N- to C-terminus: Acyl carrier protein (103 aa).

The Carrier domain occupies 14 to 89 (NIVSNIVQDI…EFIDFTLQTI (76 aa)). At S49 the chain carries O-(pantetheine 4'-phosphoryl)serine.

The protein belongs to the acyl carrier protein (ACP) family. Post-translationally, 4'-phosphopantetheine is transferred from CoA to a specific serine of apo-ACP by AcpS. This modification is essential for activity because fatty acids are bound in thioester linkage to the sulfhydryl of the prosthetic group.

It localises to the plastid. It is found in the cyanelle. It participates in lipid metabolism; fatty acid biosynthesis. Its function is as follows. Carrier of the growing fatty acid chain in fatty acid biosynthesis. This is Acyl carrier protein from Cyanophora paradoxa.